Here is a 537-residue protein sequence, read N- to C-terminus: Cytoplasmic 60S subunit biogenesis factor REI1 homolog (537 aa).

C2H2-type zinc fingers lie at residues 18–42 and 83–107; these read YTCNTCQVAFRNSELQRGHMRSDWH and KTCEVCQKTYYSENSFRNHLSSTKH. Disordered stretches follow at residues 101-151 and 163-204; these read HLSS…AEEE and SIHD…PEAL. Low complexity predominate over residues 192 to 204; it reads EETPTTTPKPEAL. Residues 260–284 form a C2H2-type 3 zinc finger; that stretch reads NECLTCGKMKVNVFAIQTHMRDKSH. Acidic residues predominate over residues 312 to 322; the sequence is DWETEEEDKGE. Disordered stretches follow at residues 312–361 and 382–401; these read DWET…ASSL and GKHPHHSRENKKAHREADGI. The span at 323 to 339 shows a compositional bias: basic and acidic residues; it reads EDGGVRLGAKRESKVVD. The span at 340 to 356 shows a compositional bias: acidic residues; that stretch reads ENGDEVMEDEEGWETDS. Residues 383-395 show a composition bias toward basic residues; sequence KHPHHSRENKKAH.

Belongs to the REI1 family. Associates with nascent pre-60S particles that have not yet entered the translating pool, and is released from mature 60S subunits.

It localises to the cytoplasm. Pre-60S-associated factor involved in the cytoplasmic maturation of the 60S subunit. Involved in the dissociation and recycling of other late pre-60S factors before newly synthesized large ribosomal subunits enter translation. The chain is Cytoplasmic 60S subunit biogenesis factor REI1 homolog from Chaetomium thermophilum (strain DSM 1495 / CBS 144.50 / IMI 039719) (Thermochaetoides thermophila).